Here is a 206-residue protein sequence, read N- to C-terminus: MARYLGPKLKLSRREGTDLFLKSGVRAIDTKCKIEQPPGQHGARKPRLSDYGVQLREKQKVRRIYGVLERQFRNYYKEAARLKGNTGANLLQLLEGRLDNVVYRMGFGATRAESRQLVSHKAIMVNGRVVNIASYQVSPNDVVSIREKAKKQSRVKAALELAEQREKPTWLEVDAVKMEGVFKRIPERTDLSADINEHLIVELYSK.

Positions 96 to 156 constitute an S4 RNA-binding domain; that stretch reads GRLDNVVYRM…EKAKKQSRVK (61 aa).

It belongs to the universal ribosomal protein uS4 family. As to quaternary structure, part of the 30S ribosomal subunit. Contacts protein S5. The interaction surface between S4 and S5 is involved in control of translational fidelity.

Functionally, one of the primary rRNA binding proteins, it binds directly to 16S rRNA where it nucleates assembly of the body of the 30S subunit. Its function is as follows. With S5 and S12 plays an important role in translational accuracy. This chain is Small ribosomal subunit protein uS4, found in Yersinia enterocolitica serotype O:8 / biotype 1B (strain NCTC 13174 / 8081).